A 361-amino-acid polypeptide reads, in one-letter code: Histidinol-phosphate aminotransferase (361 aa).

Lysine 219 carries the post-translational modification N6-(pyridoxal phosphate)lysine.

The protein belongs to the class-II pyridoxal-phosphate-dependent aminotransferase family. Histidinol-phosphate aminotransferase subfamily. Homodimer. The cofactor is pyridoxal 5'-phosphate.

It catalyses the reaction L-histidinol phosphate + 2-oxoglutarate = 3-(imidazol-4-yl)-2-oxopropyl phosphate + L-glutamate. The protein operates within amino-acid biosynthesis; L-histidine biosynthesis; L-histidine from 5-phospho-alpha-D-ribose 1-diphosphate: step 7/9. In Acinetobacter baumannii (strain ATCC 17978 / DSM 105126 / CIP 53.77 / LMG 1025 / NCDC KC755 / 5377), this protein is Histidinol-phosphate aminotransferase.